The primary structure comprises 88 residues: Large ribosomal subunit protein eL37 (88 aa).

C17, C20, C32, and C35 together coordinate Zn(2+). The segment at 17-35 (CNRCGRRSFHVQKKTCSSC) adopts a C4-type zinc-finger fold.

This sequence belongs to the eukaryotic ribosomal protein eL37 family. Requires Zn(2+) as cofactor.

Binds to the 23S rRNA. This is Large ribosomal subunit protein eL37 (RPL37) from Candida albicans (Yeast).